Here is a 413-residue protein sequence, read N- to C-terminus: Zinc finger protein 821 (413 aa).

The disordered stretch occupies residues 26 to 83 (RQAMMKTDFPGDLGSQRQAIQQLRDQDSSSSDSEGDEEETTQDEVSSHTSEEDGGVVK). The segment covering 58–67 (SEGDEEETTQ) has biased composition (acidic residues). C2H2-type zinc fingers lie at residues 117–141 (QLCQCPLCQLDCGSREQLIAHVYQH) and 151–173 (YMCPVCGRALSSPGSLGRHLLIH). Residues 260 to 367 (ALRRQNEPLE…EKMDMMLRAQ (108 aa)) are a coiled coil. The segment at 279 to 320 (RTAKKSRRDNETPEEREVRRMRDREAKRLQRMQETDEQRARR) is disordered.

This sequence belongs to the krueppel C2H2-type zinc-finger protein family.

It is found in the nucleus. Functionally, may be involved in transcriptional regulation. The chain is Zinc finger protein 821 (Znf821) from Mus musculus (Mouse).